Here is a 1253-residue protein sequence, read N- to C-terminus: Cytoplasmic FMR1-interacting protein 1 homolog (1253 aa).

The protein belongs to the CYFIP family.

The protein resides in the cytoplasm. It localises to the perinuclear region. Its subcellular location is the cell projection. The protein localises to the lamellipodium. It is found in the ruffle. The protein resides in the synapse. It localises to the synaptosome. In terms of biological role, involved in formation of membrane ruffles and lamellipodia protrusions and in axon outgrowth. Binds to F-actin but not to RNA. In Danio rerio (Zebrafish), this protein is Cytoplasmic FMR1-interacting protein 1 homolog.